A 558-amino-acid chain; its full sequence is Atlastin-1 (558 aa).

Residues 1 to 28 are disordered; that stretch reads MAKNRRDRNSWGGFSEKTYEWSSEEEEP. Residues 1–34 are N-terminal hypervariable region (HVR); the sequence is MAKNRRDRNSWGGFSEKTYEWSSEEEEPVKKAGP. Topologically, residues 1-449 are cytoplasmic; it reads MAKNRRDRNS…NIFHAARTPA (449 aa). 3 positions are modified to phosphoserine: S10, S22, and S23. The 246-residue stretch at 64–309 folds into the GB1/RHD3-type G domain; that stretch reads DKEVVAVSVA…LIPWLLSPES (246 aa). The GDP site is built by R77, K78, G79, K80, S81, F82, Q148, R217, D218, V276, and N279. GTP is bound by residues R77, K78, G79, K80, S81, and F82. S81 provides a ligand contact to Mg(2+). 3 residues coordinate GTP: R217, D218, and V276. Positions 347-438 are 3HB (three-helix bundle) domain; sequence MLQATAEANN…YIQYIKHNDS (92 aa). An N6-acetyllysine modification is found at K395. The stretch at 418-439 forms a coiled coil; the sequence is LQQLETEIDELYIQYIKHNDSK. The segment at 439–447 is linker; it reads KNIFHAART. The helical transmembrane segment at 450–470 threads the bilayer; sequence TLFVVIFITYVIAGVTGFIGL. D471 is a topological domain (lumenal). The chain crosses the membrane as a helical span at residues 472–492; that stretch reads IIASLCNMIMGLTLITLCTWA. Residues 493 to 558 lie on the Cytoplasmic side of the membrane; that stretch reads YIRYSGEYRE…STEQSEKKKM (66 aa). The tract at residues 521–558 is autoinhibitory domain; sequence NEALYKLYSAAATHRHLYHQAFPAPKSESTEQSEKKKM.

It belongs to the TRAFAC class dynamin-like GTPase superfamily. GB1/RHD3 GTPase family. GB1 subfamily. As to quaternary structure, monomeric and homodimeric. The homodimer, transiently formed by two molecules on opposing membranes, is the active form mediating ER membrane fusion. Interacts with REEP1, REEP5, RTN3 and RTN4 (via the transmembrane region); these proteins are involved in endoplasmic reticulum tubular network organization. Interacts with ZFYVE27; both proteins are involved in endoplasmic reticulum tubular network organization. Interacts with ARL6IP1; both proteins are involved in endoplasmic reticulum tubular network organization. Interacts with SPAST; the interaction is direct, could recruit SPAST to Golgi membranes. Interacts (via N-terminal region) with MAP4K4 (via CNH regulatory domain). May interact with TMED2. Interacts with CPT1C. Phosphorylated. Phosphorylation, by different kinases, of the N-terminal hypervariable region (HVR) regulates the ATL1-mediated membrane tethering step.

Its subcellular location is the endoplasmic reticulum membrane. It is found in the golgi apparatus membrane. It localises to the cell projection. The protein resides in the axon. The catalysed reaction is GTP + H2O = GDP + phosphate + H(+). Its function is as follows. Atlastin-1 (ATL1) is a membrane-anchored GTPase that mediates the GTP-dependent fusion of endoplasmic reticulum (ER) membranes, maintaining the continuous ER network. It facilitates the formation of three-way junctions where ER tubules intersect. Two atlastin-1 on neighboring ER tubules bind GTP and form loose homodimers through the GB1/RHD3-type G domains and 3HB regions. Upon GTP hydrolysis, the 3HB regions tighten, pulling the membranes together to drive their fusion. After fusion, the homodimer disassembles upon release of inorganic phosphate (Pi). Subsequently, GDP dissociates, resetting the monomers to a conformation ready for a new fusion cycle. May also regulate more or less directly Golgi biogenesis. Indirectly regulates axonal development. This is Atlastin-1 from Bos taurus (Bovine).